The sequence spans 283 residues: ATP synthase gamma chain (283 aa).

The protein belongs to the ATPase gamma chain family. F-type ATPases have 2 components, CF(1) - the catalytic core - and CF(0) - the membrane proton channel. CF(1) has five subunits: alpha(3), beta(3), gamma(1), delta(1), epsilon(1). CF(0) has three main subunits: a, b and c.

Its subcellular location is the cell membrane. Its function is as follows. Produces ATP from ADP in the presence of a proton gradient across the membrane. The gamma chain is believed to be important in regulating ATPase activity and the flow of protons through the CF(0) complex. This chain is ATP synthase gamma chain, found in Clostridium kluyveri (strain NBRC 12016).